Reading from the N-terminus, the 632-residue chain is METDPANSSSKSPAVVSEKDVLIPEPSENTVGVVQDPVSAEREAHEDSISTEASVAKVDDTQMPASSTGSEPLSKTDDIVPCPPGSSPRESPPSIFSSSGLSSWAKSFKFQQQDPNRTDSGMSAFTRFTSELGLHLPTKGSEEVGDSRSSNTQVGGAFESLTKAVVDSSRGAVKAMQVKARHIVSQNKRRYQEGEFDLDMTYITENIIAMGFPAGDISSGLFGFFEGLYRNHMEEVIKFFETHHKDKYKVYNLCSERLYDASRFEGKVASFPFDDHNCPPIQLIPSFCQSAYTWLKEDIQNVVVVHCKAGMARTGLMICCLLLYLKFFPTAEEAIDYYNQKRCLDGKALVLPSQIRYVKYYERVQNQFDGKVPPERRCMLRGFRLINCPYWIRPAITISNHTDILFSTKKHQKTKDLGPEDFWIKAPKKGVVVFAIPGEAGLTELAGDFKIHFQDSDGDFYCWLNTTLTDNRTMLKGSDFDGFDKRKLPAPGFHVEIVMIEPDNSQPTKSKSDSTQQQSQSSSSADSSKLKSNEKDDDVFSDSDGEEEGNSQSYSTNEKTASSMHTTSKPHQINEPPKRDDPSANRSVTSSSSSGHYNPIPNNSLAVSDIKAIAADASVFSFGDEEEDYESD.

Residues 1–12 (METDPANSSSKS) are compositionally biased toward polar residues. Residues 1–98 (METDPANSSS…RESPPSIFSS (98 aa)) are disordered. Over residues 39 to 48 (SAEREAHEDS) the composition is skewed to basic and acidic residues. Residues 63–73 (MPASSTGSEPL) show a composition bias toward polar residues. Low complexity predominate over residues 87–98 (SPRESPPSIFSS). Residues 189–368 (RRYQEGEFDL…KYYERVQNQF (180 aa)) enclose the Phosphatase tensin-type domain. The active-site Phosphocysteine intermediate is the C307. One can recognise a C2 tensin-type domain in the interval 375-502 (ERRCMLRGFR…FHVEIVMIEP (128 aa)). A disordered region spans residues 504-603 (NSQPTKSKSD…SGHYNPIPNN (100 aa)). Over residues 505–527 (SQPTKSKSDSTQQQSQSSSSADS) the composition is skewed to low complexity. Residues 535 to 549 (KDDDVFSDSDGEEEG) are compositionally biased toward acidic residues. Phosphoserine is present on S541. The segment covering 550 to 571 (NSQSYSTNEKTASSMHTTSKPH) has biased composition (polar residues). Low complexity predominate over residues 584-594 (ANRSVTSSSSS).

This sequence belongs to the PTEN phosphatase protein family. Expressed, at low levels, in seedlings, roots, stems, leaves, flowers and siliques. However, at protein level, not observed in older leaves, flowers and siliques.

The catalysed reaction is O-phospho-L-tyrosyl-[protein] + H2O = L-tyrosyl-[protein] + phosphate. It catalyses the reaction a 1,2-diacyl-sn-glycero-3-phospho-(1D-myo-inositol-3,4,5-trisphosphate) + H2O = a 1,2-diacyl-sn-glycero-3-phospho-(1D-myo-inositol-4,5-bisphosphate) + phosphate. Functionally, protein tyrosine phosphatase that also exhibits a weak lipid phosphatase activity towards PtdIns(3)P. The chain is Phosphatidylinositol 3,4,5-trisphosphate 3-phosphatase and protein-tyrosine-phosphatase PTEN2B from Arabidopsis thaliana (Mouse-ear cress).